Consider the following 406-residue polypeptide: Succinylornithine transaminase (406 aa).

Lys252 carries the post-translational modification N6-(pyridoxal phosphate)lysine.

The protein belongs to the class-III pyridoxal-phosphate-dependent aminotransferase family. AstC subfamily. The cofactor is pyridoxal 5'-phosphate.

The enzyme catalyses N(2)-succinyl-L-ornithine + 2-oxoglutarate = N-succinyl-L-glutamate 5-semialdehyde + L-glutamate. It functions in the pathway amino-acid degradation; L-arginine degradation via AST pathway; L-glutamate and succinate from L-arginine: step 3/5. In terms of biological role, catalyzes the transamination of N(2)-succinylornithine and alpha-ketoglutarate into N(2)-succinylglutamate semialdehyde and glutamate. Can also act as an acetylornithine aminotransferase. The protein is Succinylornithine transaminase of Escherichia fergusonii (strain ATCC 35469 / DSM 13698 / CCUG 18766 / IAM 14443 / JCM 21226 / LMG 7866 / NBRC 102419 / NCTC 12128 / CDC 0568-73).